Reading from the N-terminus, the 185-residue chain is Threonylcarbamoyl-AMP synthase (185 aa).

The YrdC-like domain occupies 5–185; that stretch reads ADRIADAVAA…DLQSGETLRR (181 aa).

This sequence belongs to the SUA5 family. TsaC subfamily.

It is found in the cytoplasm. The enzyme catalyses L-threonine + hydrogencarbonate + ATP = L-threonylcarbamoyladenylate + diphosphate + H2O. In terms of biological role, required for the formation of a threonylcarbamoyl group on adenosine at position 37 (t(6)A37) in tRNAs that read codons beginning with adenine. Catalyzes the conversion of L-threonine, HCO(3)(-)/CO(2) and ATP to give threonylcarbamoyl-AMP (TC-AMP) as the acyladenylate intermediate, with the release of diphosphate. This is Threonylcarbamoyl-AMP synthase from Chromohalobacter salexigens (strain ATCC BAA-138 / DSM 3043 / CIP 106854 / NCIMB 13768 / 1H11).